The primary structure comprises 165 residues: V-type proton ATPase 16 kDa proteolipid subunit (165 aa).

Residues 1–10 (MSSTFSGDET) lie on the Lumenal side of the membrane. Residues 11-33 (APFFGFLGAAAALVFSCMGAAYG) traverse the membrane as a helical segment. Residues 34-55 (TAKSGVGVASMGVMRPELVMKS) are Cytoplasmic-facing. Residues 56–76 (IVPVVMAGVLGIYGLIIAVII) traverse the membrane as a helical segment. The Lumenal segment spans residues 77–95 (STGINPKAKSYYLFDGYAH). The chain crosses the membrane as a helical span at residues 96-117 (LSSGLACGLAGLSAGMAIGIVG). The Cytoplasmic portion of the chain corresponds to 118–129 (DAGVRANAQQPK). The helical transmembrane segment at 130–155 (LFVGMILILIFAEALALYGLIVGIIL) threads the bilayer. Residues 156 to 165 (SSRAGQSRAE) lie on the Lumenal side of the membrane.

This sequence belongs to the V-ATPase proteolipid subunit family. As to quaternary structure, V-ATPase is a heteromultimeric enzyme composed of a peripheral catalytic V1 complex (main components: subunits A, B, C, D, E, and F) attached to an integral membrane V0 proton pore complex (main component: the proteolipid protein; which is present as a hexamer that forms the proton-conducting pore).

It is found in the vacuole membrane. Its function is as follows. Proton-conducting pore forming subunit of the membrane integral V0 complex of vacuolar ATPase. V-ATPase is responsible for acidifying a variety of intracellular compartments in eukaryotic cells. The sequence is that of V-type proton ATPase 16 kDa proteolipid subunit (CVA16-2) from Gossypium hirsutum (Upland cotton).